Here is a 417-residue protein sequence, read N- to C-terminus: Carboxypeptidase A2 (417 aa).

The first 16 residues, 1 to 16 (MRLTPLLVALFGYIYC), serve as a signal peptide directing secretion. Positions 17–112 (QETFVGDQVL…EMLFNQQRER (96 aa)) are cleaved as a propeptide — activation peptide. One can recognise a Peptidase M14 domain in the interval 120–412 (AYHTLEEIYQ…LGLKTIMEHV (293 aa)). The Zn(2+) site is built by His-177 and Glu-180. Substrate contacts are provided by residues 177–180 (HARE), Arg-235, and 252–253 (NR). The cysteines at positions 246 and 269 are disulfide-linked. Residue His-304 participates in Zn(2+) binding. 305-306 (SY) is a binding site for substrate. A disulfide bridge links Cys-318 with Cys-352. Tyr-356 serves as a coordination point for substrate. Glu-378 functions as the Proton donor/acceptor in the catalytic mechanism.

This sequence belongs to the peptidase M14 family. Zn(2+) serves as cofactor.

It localises to the secreted. It catalyses the reaction Similar to that of carboxypeptidase A (EC 3.4.17.1), but with a preference for bulkier C-terminal residues.. Its function is as follows. Carboxypeptidase that catalyzes the release of a C-terminal amino acid, with a preference for large aromatic C-terminal residues. The sequence is that of Carboxypeptidase A2 (Cpa2) from Mus musculus (Mouse).